Here is a 305-residue protein sequence, read N- to C-terminus: Translation initiation factor eIF2B subunit alpha (305 aa).

The protein belongs to the eIF-2B alpha/beta/delta subunits family. Component of the translation initiation factor 2B (eIF2B) complex which is a heterodecamer of two sets of five different subunits: alpha, beta, gamma, delta and epsilon. Subunits alpha, beta and delta comprise a regulatory subcomplex and subunits epsilon and gamma comprise a catalytic subcomplex. Within the complex, the hexameric regulatory complex resides at the center, with the two heterodimeric catalytic subcomplexes bound on opposite sides.

The protein resides in the cytoplasm. The protein localises to the cytosol. Functionally, acts as a component of the translation initiation factor 2B (eIF2B) complex, which catalyzes the exchange of GDP for GTP on eukaryotic initiation factor 2 (eIF2) gamma subunit. Its guanine nucleotide exchange factor activity is repressed when bound to eIF2 complex phosphorylated on the alpha subunit, thereby limiting the amount of methionyl-initiator methionine tRNA available to the ribosome and consequently global translation is repressed. The protein is Translation initiation factor eIF2B subunit alpha of Caenorhabditis elegans.